Here is a 60-residue protein sequence, read N- to C-terminus: Large ribosomal subunit protein bL32 (60 aa).

Residues 1–27 are disordered; the sequence is MAVPRNRLSNARKNSKRAHHAKKPKSL. Residues 13–25 are compositionally biased toward basic residues; that stretch reads KNSKRAHHAKKPK.

This sequence belongs to the bacterial ribosomal protein bL32 family.

This Protochlamydia amoebophila (strain UWE25) protein is Large ribosomal subunit protein bL32.